A 227-amino-acid polypeptide reads, in one-letter code: MTAIAPVITIDGPSGAGKGTLCKAMAEALQWHLLDSGAIYRVLALAALHHHVDVASEDALVPLASHLDVRFVSTNGNLEVILEGEDVSGEIRTQEVANAASQVATFPRVREALLRRQRAFRELPGLIADGRDMGTVVFPDAPVKIFLDASSEERAHRRMLQLQEKGFSVNFERLLAEIKERDDRDRNRAVAPLVPAADALVLDSTTLSIEQVIEKALQYARQKLALA.

12–20 (GPSGAGKGT) contacts ATP.

Belongs to the cytidylate kinase family. Type 1 subfamily.

It is found in the cytoplasm. It carries out the reaction CMP + ATP = CDP + ADP. It catalyses the reaction dCMP + ATP = dCDP + ADP. This chain is Cytidylate kinase, found in Shigella boydii serotype 4 (strain Sb227).